The sequence spans 38 residues: Photosystem I reaction center subunit IX (38 aa).

Residues 4-24 (FLTTAPVVAAIWFTATAGILI) form a helical membrane-spanning segment.

Belongs to the PsaJ family.

It localises to the cellular thylakoid membrane. May help in the organization of the PsaE and PsaF subunits. The chain is Photosystem I reaction center subunit IX from Synechococcus sp. (strain CC9902).